The following is a 450-amino-acid chain: 23S rRNA (uracil(1939)-C(5))-methyltransferase RlmD (450 aa).

Residues 1–22 are disordered; sequence MARNKGGLRFQPSGGARGPAIP. Residues 20–78 form the TRAM domain; the sequence is AIPVGKKQRLTIERLAHDGRGIAHEAGMTWFVSGGLPGEELEARVLGARSKVVDARSER. [4Fe-4S] cluster contacts are provided by C91, C97, C100, and C179. Q283, F312, N317, E333, D360, and D381 together coordinate S-adenosyl-L-methionine. C407 serves as the catalytic Nucleophile.

Belongs to the class I-like SAM-binding methyltransferase superfamily. RNA M5U methyltransferase family. RlmD subfamily.

The enzyme catalyses uridine(1939) in 23S rRNA + S-adenosyl-L-methionine = 5-methyluridine(1939) in 23S rRNA + S-adenosyl-L-homocysteine + H(+). Functionally, catalyzes the formation of 5-methyl-uridine at position 1939 (m5U1939) in 23S rRNA. This Pseudomonas aeruginosa (strain UCBPP-PA14) protein is 23S rRNA (uracil(1939)-C(5))-methyltransferase RlmD.